Here is a 762-residue protein sequence, read N- to C-terminus: Proline-rich receptor-like protein kinase PERK10 (762 aa).

The disordered stretch occupies residues 1 to 322 (MTTPAQAPRE…PTPVTDNSSS (322 aa)). Residues 1–328 (MTTPAQAPRE…NSSSSGISIA (328 aa)) are Extracellular-facing. The segment covering 13–23 (SLSPSLASPPL) has biased composition (low complexity). Asn-37 carries an N-linked (GlcNAc...) asparagine glycan. Positions 41–57 (PTREPTNGNPPETTNTP) are enriched in low complexity. Composition is skewed to pro residues over residues 60–210 (SSPP…PSTP), 231–246 (PPPPGSKRPTPSPPSP), and 254–275 (HPSPPSPPEETLPPPKPSPDPL). Positions 276–305 (PSNSSSPPTLLPPSSVVSPPSPPRKSVSGP) are enriched in low complexity. Asn-278 and Asn-319 each carry an N-linked (GlcNAc...) asparagine glycan. A helical membrane pass occupies residues 329 to 349 (AVVGVSIGVALVLLTLIGVVV). Topologically, residues 350–762 (CCLKKRKKRL…NSYISKDENL (413 aa)) are cytoplasmic. The tract at residues 370–410 (TPMESSSPRSDSALLKTQSSAPLVGNRSSNRTYLSQSEPGG) is disordered. Polar residues predominate over residues 372–407 (MESSSPRSDSALLKTQSSAPLVGNRSSNRTYLSQSE). The 277-residue stretch at 430–706 (FSDENLLGEG…SQIVRAFDSL (277 aa)) folds into the Protein kinase domain. Residues 436 to 444 (LGEGGFGRV) and Lys-458 contribute to the ATP site. The active-site Proton acceptor is the Asp-554.

Belongs to the protein kinase superfamily. Ser/Thr protein kinase family. As to quaternary structure, interacts with KIPK1 and KIPK2 (via its cytosolic domain). As to expression, mostly expressed in inflorescence bolts and flower buds, and, to a lower extent, in roots, seedlings, leaves and siliques.

The protein resides in the cell membrane. The enzyme catalyses L-seryl-[protein] + ATP = O-phospho-L-seryl-[protein] + ADP + H(+). It carries out the reaction L-threonyl-[protein] + ATP = O-phospho-L-threonyl-[protein] + ADP + H(+). In terms of biological role, could be involved in the negative regulation of root growth. In Arabidopsis thaliana (Mouse-ear cress), this protein is Proline-rich receptor-like protein kinase PERK10 (PERK10).